The primary structure comprises 561 residues: NAD(P)H-quinone oxidoreductase chain 4 2 (561 aa).

14 helical membrane passes run 6–26, 36–56, 87–107, 115–135, 136–156, 169–189, 210–230, 244–264, 275–295, 312–332, 333–353, 376–396, 419–439, and 490–510; these read FPWL…IPFI, WYGL…FWKY, LSMP…FAAW, LFYF…VAQD, LMLL…LISI, FLLY…GMAL, AFEL…LAVF, SAPV…YGLI, HVYF…YGGL, VAHM…GISG, ALLQ…LAGV, IFAL…MSGF, VTVF…LSML, and VAIA…PKIA.

The protein belongs to the complex I subunit 4 family.

It is found in the cellular thylakoid membrane. The enzyme catalyses a plastoquinone + NADH + (n+1) H(+)(in) = a plastoquinol + NAD(+) + n H(+)(out). The catalysed reaction is a plastoquinone + NADPH + (n+1) H(+)(in) = a plastoquinol + NADP(+) + n H(+)(out). In terms of biological role, NDH-1 shuttles electrons from NAD(P)H, via FMN and iron-sulfur (Fe-S) centers, to quinones in the respiratory chain. The immediate electron acceptor for the enzyme in this species is believed to be plastoquinone. Couples the redox reaction to proton translocation (for every two electrons transferred, four hydrogen ions are translocated across the cytoplasmic membrane), and thus conserves the redox energy in a proton gradient. The sequence is that of NAD(P)H-quinone oxidoreductase chain 4 2 from Trichodesmium erythraeum (strain IMS101).